The primary structure comprises 338 residues: Transcription factor GRA2 (338 aa).

2 disordered regions span residues 171-230 (CQDS…PHYA) and 256-277 (TQHE…DGGS). The segment covering 174–203 (SGVSQPSNLADDTLGQGQPVSTVVQPQHPG) has biased composition (polar residues). The tract at residues 223-236 (KRQRPHYAIEKRYR) is basic motif. In terms of domain architecture, bHLH spans 223–303 (KRQRPHYAIE…NQATLCIRQL (81 aa)). The interval 237 to 303 (AGLQERFEAL…NQATLCIRQL (67 aa)) is helix-loop-helix motif.

The protein localises to the nucleus. Transcription factor that specifically regulates the expression of the gene cluster that mediates the biosynthesis of gramillins A and B, bicyclic lipopeptides that induce cell death in maize leaves but not in wheat leaves. This is Transcription factor GRA2 (GRA2) from Gibberella zeae (strain ATCC MYA-4620 / CBS 123657 / FGSC 9075 / NRRL 31084 / PH-1) (Wheat head blight fungus).